The chain runs to 360 residues: Peptide chain release factor 1 (360 aa).

N5-methylglutamine is present on glutamine 235.

This sequence belongs to the prokaryotic/mitochondrial release factor family. Methylated by PrmC. Methylation increases the termination efficiency of RF1.

The protein localises to the cytoplasm. Its function is as follows. Peptide chain release factor 1 directs the termination of translation in response to the peptide chain termination codons UAG and UAA. The chain is Peptide chain release factor 1 from Burkholderia mallei (strain NCTC 10247).